Reading from the N-terminus, the 101-residue chain is uncharacterized protein (101 aa).

This is an uncharacterized protein from Mycobacterium bovis (strain ATCC BAA-935 / AF2122/97).